We begin with the raw amino-acid sequence, 48 residues long: Large ribosomal subunit protein bL32 (48 aa).

Positions 1–20 (MAVPDRRVSKTRAAKRRTHY) are disordered. Positions 9–20 (SKTRAAKRRTHY) are enriched in basic residues.

The protein belongs to the bacterial ribosomal protein bL32 family.

This chain is Large ribosomal subunit protein bL32, found in Helicobacter acinonychis (strain Sheeba).